A 144-amino-acid chain; its full sequence is Bacilliredoxin BCE33L1972 (144 aa).

Belongs to the bacilliredoxin family.

The chain is Bacilliredoxin BCE33L1972 from Bacillus cereus (strain ZK / E33L).